Here is a 338-residue protein sequence, read N- to C-terminus: DNA-directed RNA polymerase subunit alpha (338 aa).

The tract at residues 1 to 234 (MIQKNWQELT…DQLNVFVNFE (234 aa)) is alpha N-terminal domain (alpha-NTD). Residues 250 to 338 (FNPALLKKVD…DLAKRFEEHY (89 aa)) form an alpha C-terminal domain (alpha-CTD) region.

The protein belongs to the RNA polymerase alpha chain family. As to quaternary structure, homodimer. The RNAP catalytic core consists of 2 alpha, 1 beta, 1 beta' and 1 omega subunit. When a sigma factor is associated with the core the holoenzyme is formed, which can initiate transcription.

The enzyme catalyses RNA(n) + a ribonucleoside 5'-triphosphate = RNA(n+1) + diphosphate. In terms of biological role, DNA-dependent RNA polymerase catalyzes the transcription of DNA into RNA using the four ribonucleoside triphosphates as substrates. This chain is DNA-directed RNA polymerase subunit alpha, found in Methylocella silvestris (strain DSM 15510 / CIP 108128 / LMG 27833 / NCIMB 13906 / BL2).